A 286-amino-acid polypeptide reads, in one-letter code: E3 ubiquitin-protein ligase RNF170 (286 aa).

Topologically, residues 1–52 (MQRYWRFQDNKIQDICFGVLGESWIQRPVMARYYSEGQSLQQDDSFIEGVSD) are lumenal. A helical membrane pass occupies residues 53-73 (QVLVAVVVSLALTATLLYALL). Topologically, residues 74–229 (RNVQQNIHPE…GGLFWMFRIR (156 aa)) are cytoplasmic. An RING-type zinc finger spans residues 115-158 (CPICLHQASFPVETNCGHLFCGSCIIAYWRYGSWLGAISCPICR). The chain crosses the membrane as a helical span at residues 230–250 (IMLCLMGAFFYLISPLDFVPE). Residue A251 is a topological domain, lumenal. The chain crosses the membrane as a helical span at residues 252 to 272 (LFGILGFLDDFFVIFLLLIYI). Over 273–286 (SIMYREVITQRLTR) the chain is Cytoplasmic.

In terms of assembly, constitutively associated with the ERLIN1/ERLIN 2 complex. Interacts with activated ITPR1.

It is found in the endoplasmic reticulum membrane. The catalysed reaction is S-ubiquitinyl-[E2 ubiquitin-conjugating enzyme]-L-cysteine + [acceptor protein]-L-lysine = [E2 ubiquitin-conjugating enzyme]-L-cysteine + N(6)-ubiquitinyl-[acceptor protein]-L-lysine.. Its pathway is protein modification; protein ubiquitination. Its function is as follows. E3 ubiquitin-protein ligase that plays an essential role in stimulus-induced inositol 1,4,5-trisphosphate receptor type 1 (ITPR1) ubiquitination and degradation via the endoplasmic reticulum-associated degradation (ERAD) pathway. Also involved in ITPR1 turnover in resting cells. Selectively inhibits the TLR3-triggered innate immune response by promoting the 'Lys-48'-linked polyubiquitination and degradation of TLR3. The sequence is that of E3 ubiquitin-protein ligase RNF170 (Rnf170) from Mus musculus (Mouse).